Here is a 471-residue protein sequence, read N- to C-terminus: Putative multidrug resistance protein MdtD (471 aa).

13 consecutive transmembrane segments (helical) span residues 12 to 32, 49 to 69, 72 to 92, 101 to 123, 138 to 158, 165 to 185, 195 to 215, 220 to 240, 265 to 285, 286 to 306, 342 to 362, 393 to 413, and 431 to 451; these read LWIVAFGFFMQSLDTTIVNTA, MVIVSYVLTVAVMLPASGWMA, IGVRNIFFTAIVLFTLGSLFC, LVMSRVLQGVGGAMMVPVGRLTV, FVTLPGQVGPLLGPALGGILV, WIFLINLPVGIVGAIATLWLM, FDIFGFVLLAAGMATLTLALD, LGISTLTLCLLIVIGIVSILW, IGLFGSFVGRLGSGMLPFMTP, VFLQIGLGFSPFHAGLMMIPM, LVFMAVALMGWYYVLPLVLFF, LLSMIMQLSMSVGVTVAGLLL, and VFLYTYLSMAVIIALPALIFA.

Belongs to the major facilitator superfamily. TCR/Tet family.

It is found in the cell inner membrane. The protein is Putative multidrug resistance protein MdtD of Enterobacter sp. (strain 638).